A 171-amino-acid chain; its full sequence is UPF0763 protein HPSH_03535 (171 aa).

The protein belongs to the UPF0763 family.

The protein is UPF0763 protein HPSH_03535 of Helicobacter pylori (strain Shi470).